Here is a 377-residue protein sequence, read N- to C-terminus: Caspase-4 (377 aa).

The required for LPS-binding stretch occupies residues 1-59 (MAEDKHNKNPLKMLESLGKELISGLLDDFVEKNVLKLEEEEKKKIYDAKLQDKARVLVD). Residues 1–80 (MAEDKHNKNP…VFVQTFLNID (80 aa)) constitute a propeptide that is removed on maturation. Residues 1-91 (MAEDKHNKNP…NSTSIKAPEE (91 aa)) enclose the CARD domain. Phosphoserine is present on serine 83. Active-site residues include histidine 210 and cysteine 258. The propeptide occupies 271–289 (SPPALADSFSQSSENLEED).

The protein belongs to the peptidase C14A family. In terms of assembly, heterotetramer that consists of two anti-parallel arranged heterodimers, each one formed by a 20 kDa (Caspase-4 subunit p20) and a 10 kDa (Caspase-4 subunit p10) subunit. Upon direct LPS-binding, forms large homooligomers, resulting in its activation. These oligomers are often referred to as 'non-canonical inflammasomes'. In its precursor form, interacts with TMEM214; this interaction is required for association with the endoplasmic reticulum membrane. Interacts with CASP1. Interacts with NOD2. Interacts with Serpinb1a, Serpinb1b and Serpinb1c; these interactions regulate CASP4 activity. Heterotetramer that consists of two anti-parallel arranged heterodimers, each one formed by a 20 kDa (Caspase-4 subunit p20) and a 10 kDa (Caspase-4 subunit p10) subunit. Post-translationally, in response to activation signals, undergoes autoproteolytic cleavage and activation.

It localises to the cytoplasm. It is found in the cytosol. The protein localises to the endoplasmic reticulum membrane. The protein resides in the mitochondrion. Its subcellular location is the inflammasome. It localises to the secreted. It catalyses the reaction Strict requirement for Asp at the P1 position. It has a preferred cleavage sequence of Tyr-Val-Ala-Asp-|- but also cleaves at Asp-Glu-Val-Asp-|-.. With respect to regulation, activated by homooligomerization induced by direct binding to cytosolic LPS, in a TLR4-independent manner. In addition to LPS, CASP4/CASP11 may also be activated by oxidized phospholipid 1-palmitoyl-2-arachidonoyl- sn-glycero-3-phosphorylcholine, an oxidized phospholipid (oxPAPC), in dendritic cells, promoting adaptive immunity. The role of oxPAPC is however unclear and another report suggests that oxPAPC competes with LPS-binding and inhibits the non-canonical inflammasome in macrophages. Functionally, inflammatory caspase that acts as the effector of the non-canonical inflammasome by mediating lipopolysaccharide (LPS)-induced pyroptosis. Also indirectly activates the NLRP3 and NLRP6 inflammasomes. Acts as a thiol protease that cleaves a tetrapeptide after an Asp residue at position P1: catalyzes cleavage of CGAS, GSDMD and IL18. Effector of the non-canonical inflammasome independently of NLRP3 inflammasome and CASP1: the non-canonical inflammasome promotes pyroptosis through GSDMD cleavage without involving secretion of cytokine IL1B. In the non-canonical inflammasome, CASP4 is activated by direct binding to the lipid A moiety of LPS without the need of an upstream sensor. LPS-binding promotes CASP4 activation and CASP4-mediated cleavage of GSDMD and IL18, followed by IL18 secretion through the GSDMD pore, pyroptosis of infected cells and their extrusion into the gut lumen. Also indirectly promotes secretion of mature cytokines (IL1A and HMGB1) downstream of GSDMD-mediated pyroptosis via activation of the NLRP3 and NLRP6 inflammasomes. Involved in NLRP3-dependent CASP1 activation and IL1B secretion in response to non-canonical activators, such as UVB radiation or cholera enterotoxin. Involved in NLRP6 inflammasome-dependent activation in response to lipoteichoic acid (LTA), a cell-wall component of Gram-positive bacteria, which leads to CASP1 activation and IL1B secretion. Involved in LPS-induced IL6 secretion; this activity may not require caspase enzymatic activity. The non-canonical inflammasome is required for innate immunity to cytosolic, but not vacuolar, bacteria. Plays a crucial role in the restriction of S.typhimurium replication in colonic epithelial cells during infection. Pyroptosis limits bacterial replication, while cytokine secretion promotes the recruitment and activation of immune cells and triggers mucosal inflammation. May also act as an activator of adaptive immunity in dendritic cells, following activation by oxidized phospholipid 1-palmitoyl-2-arachidonoyl- sn-glycero-3-phosphorylcholine, an oxidized phospholipid (oxPAPC). Cleavage of GSDMD is not strictly dependent on the consensus cleavage site but depends on an exosite interface on CASP4 that recognizes and binds the Gasdermin-D, C-terminal (GSDMD-CT) part. Catalyzes cleavage and maturation of IL18; IL18 processing also depends of the exosite interface on CASP4. In contrast, it does not directly process IL1B. During non-canonical inflammasome activation, cuts CGAS and may play a role in the regulation of antiviral innate immune activation. The protein is Caspase-4 (CASP4) of Bos taurus (Bovine).